The primary structure comprises 339 residues: Uroporphyrinogen decarboxylase (339 aa).

Substrate is bound by residues 21 to 25 (RQAGR), Asp71, Tyr147, Ser202, and His315.

Belongs to the uroporphyrinogen decarboxylase family. Homodimer.

The protein localises to the cytoplasm. It catalyses the reaction uroporphyrinogen III + 4 H(+) = coproporphyrinogen III + 4 CO2. It participates in porphyrin-containing compound metabolism; protoporphyrin-IX biosynthesis; coproporphyrinogen-III from 5-aminolevulinate: step 4/4. Catalyzes the decarboxylation of four acetate groups of uroporphyrinogen-III to yield coproporphyrinogen-III. The protein is Uroporphyrinogen decarboxylase of Helicobacter pylori (strain HPAG1).